The sequence spans 128 residues: Aspartate 1-decarboxylase (128 aa).

Catalysis depends on S25, which acts as the Schiff-base intermediate with substrate; via pyruvic acid. S25 carries the pyruvic acid (Ser) modification. Substrate is bound at residue T57. Y58 serves as the catalytic Proton donor. G73–A75 serves as a coordination point for substrate.

It belongs to the PanD family. In terms of assembly, heterooctamer of four alpha and four beta subunits. Requires pyruvate as cofactor. In terms of processing, is synthesized initially as an inactive proenzyme, which is activated by self-cleavage at a specific serine bond to produce a beta-subunit with a hydroxyl group at its C-terminus and an alpha-subunit with a pyruvoyl group at its N-terminus.

The protein resides in the cytoplasm. It catalyses the reaction L-aspartate + H(+) = beta-alanine + CO2. The protein operates within cofactor biosynthesis; (R)-pantothenate biosynthesis; beta-alanine from L-aspartate: step 1/1. Its function is as follows. Catalyzes the pyruvoyl-dependent decarboxylation of aspartate to produce beta-alanine. The protein is Aspartate 1-decarboxylase of Burkholderia multivorans (strain ATCC 17616 / 249).